A 125-amino-acid polypeptide reads, in one-letter code: Large ribosomal subunit protein bL21 (125 aa).

It belongs to the bacterial ribosomal protein bL21 family. As to quaternary structure, part of the 50S ribosomal subunit. Contacts protein L20.

In terms of biological role, this protein binds to 23S rRNA in the presence of protein L20. The chain is Large ribosomal subunit protein bL21 from Synechococcus sp. (strain CC9311).